Here is a 245-residue protein sequence, read N- to C-terminus: 1-(5-phosphoribosyl)-5-[(5-phosphoribosylamino)methylideneamino] imidazole-4-carboxamide isomerase (245 aa).

Aspartate 7 functions as the Proton acceptor in the catalytic mechanism. Aspartate 129 functions as the Proton donor in the catalytic mechanism.

This sequence belongs to the HisA/HisF family.

Its subcellular location is the cytoplasm. It carries out the reaction 1-(5-phospho-beta-D-ribosyl)-5-[(5-phospho-beta-D-ribosylamino)methylideneamino]imidazole-4-carboxamide = 5-[(5-phospho-1-deoxy-D-ribulos-1-ylimino)methylamino]-1-(5-phospho-beta-D-ribosyl)imidazole-4-carboxamide. Its pathway is amino-acid biosynthesis; L-histidine biosynthesis; L-histidine from 5-phospho-alpha-D-ribose 1-diphosphate: step 4/9. The sequence is that of 1-(5-phosphoribosyl)-5-[(5-phosphoribosylamino)methylideneamino] imidazole-4-carboxamide isomerase from Shewanella putrefaciens (strain CN-32 / ATCC BAA-453).